The chain runs to 139 residues: Aspartate 1-decarboxylase (139 aa).

Serine 25 (schiff-base intermediate with substrate; via pyruvic acid) is an active-site residue. Serine 25 carries the pyruvic acid (Ser) modification. Residue threonine 57 participates in substrate binding. The Proton donor role is filled by tyrosine 58. Glycine 73 to alanine 75 contributes to the substrate binding site. Residues glutamate 116–alanine 139 are disordered. Over residues glycine 129 to alanine 139 the composition is skewed to polar residues.

The protein belongs to the PanD family. Heterooctamer of four alpha and four beta subunits. Requires pyruvate as cofactor. Post-translationally, is synthesized initially as an inactive proenzyme, which is activated by self-cleavage at a specific serine bond to produce a beta-subunit with a hydroxyl group at its C-terminus and an alpha-subunit with a pyruvoyl group at its N-terminus.

Its subcellular location is the cytoplasm. The catalysed reaction is L-aspartate + H(+) = beta-alanine + CO2. It participates in cofactor biosynthesis; (R)-pantothenate biosynthesis; beta-alanine from L-aspartate: step 1/1. Catalyzes the pyruvoyl-dependent decarboxylation of aspartate to produce beta-alanine. This Nocardia farcinica (strain IFM 10152) protein is Aspartate 1-decarboxylase.